The following is a 195-amino-acid chain: Recombination protein RecR (195 aa).

The segment at 53 to 68 (CSVCFNIDVKSPCSIC) adopts a C4-type zinc-finger fold. The Toprim domain occupies 76–171 (QLLCIVEELG…KITRLACGIP (96 aa)).

It belongs to the RecR family.

Its function is as follows. May play a role in DNA repair. It seems to be involved in an RecBC-independent recombinational process of DNA repair. It may act with RecF and RecO. This is Recombination protein RecR from Ehrlichia canis (strain Jake).